Here is a 20-residue protein sequence, read N- to C-terminus: Calreticulin (20 aa).

The protein belongs to the calreticulin family. Post-translationally, glycosylated.

Its subcellular location is the endoplasmic reticulum lumen. Its function is as follows. Molecular calcium-binding chaperone promoting folding, oligomeric assembly and quality control in the ER via the calreticulin/calnexin cycle. This lectin may interact transiently with almost all of the monoglucosylated glycoproteins that are synthesized in the ER. This chain is Calreticulin, found in Spinacia oleracea (Spinach).